The following is a 299-amino-acid chain: Polyamine aminopropyltransferase (299 aa).

Positions 6-252 (IVLLFALLCT…SLPNQQALQQ (247 aa)) constitute a PABS domain. S-methyl-5'-thioadenosine contacts are provided by residues Gln36, Glu120, and 147-148 (DA). The active-site Proton acceptor is the Asp168.

This sequence belongs to the spermidine/spermine synthase family. Homodimer or homotetramer.

Its subcellular location is the cytoplasm. It catalyses the reaction S-adenosyl 3-(methylsulfanyl)propylamine + putrescine = S-methyl-5'-thioadenosine + spermidine + H(+). It participates in amine and polyamine biosynthesis; spermidine biosynthesis; spermidine from putrescine: step 1/1. Catalyzes the irreversible transfer of a propylamine group from the amino donor S-adenosylmethioninamine (decarboxy-AdoMet) to putrescine (1,4-diaminobutane) to yield spermidine. The polypeptide is Polyamine aminopropyltransferase (Vibrio vulnificus (strain CMCP6)).